A 93-amino-acid chain; its full sequence is Cell division topological specificity factor (93 aa).

It belongs to the MinE family.

Prevents the cell division inhibition by proteins MinC and MinD at internal division sites while permitting inhibition at polar sites. This ensures cell division at the proper site by restricting the formation of a division septum at the midpoint of the long axis of the cell. The chain is Cell division topological specificity factor from Methylococcus capsulatus (strain ATCC 33009 / NCIMB 11132 / Bath).